The primary structure comprises 125 residues: Prepro-urotensin II-alpha (125 aa).

An N-terminal signal peptide occupies residues 1-21 (MMCNLLLSFSVLLLSCTHLVA). A propeptide spanning residues 109 to 111 (QFR) is cleaved from the precursor. An intrachain disulfide couples cysteine 119 to cysteine 124.

The protein belongs to the urotensin-2 family.

Its subcellular location is the secreted. Its function is as follows. Urotensin is found in the teleost caudal neurosecretory system. It has a suggested role in osmoregulation and as a corticotropin-releasing factor. The non-hormonal portion of this precursor may be a urotensin binding protein, urophysin. This chain is Prepro-urotensin II-alpha, found in Cyprinus carpio (Common carp).